We begin with the raw amino-acid sequence, 208 residues long: Large ribosomal subunit protein uL3 (208 aa).

The tract at residues 123 to 147 (RHGQSRGPMAHGSRYHRRPGSMGPV) is disordered.

It belongs to the universal ribosomal protein uL3 family. Part of the 50S ribosomal subunit. Forms a cluster with proteins L14 and L19.

Functionally, one of the primary rRNA binding proteins, it binds directly near the 3'-end of the 23S rRNA, where it nucleates assembly of the 50S subunit. The chain is Large ribosomal subunit protein uL3 from Streptococcus gordonii (strain Challis / ATCC 35105 / BCRC 15272 / CH1 / DL1 / V288).